Consider the following 156-residue polypeptide: Small ribosomal subunit protein uS7 (156 aa).

Belongs to the universal ribosomal protein uS7 family. Part of the 30S ribosomal subunit. Contacts proteins S9 and S11.

In terms of biological role, one of the primary rRNA binding proteins, it binds directly to 16S rRNA where it nucleates assembly of the head domain of the 30S subunit. Is located at the subunit interface close to the decoding center, probably blocks exit of the E-site tRNA. This Levilactobacillus brevis (strain ATCC 367 / BCRC 12310 / CIP 105137 / JCM 1170 / LMG 11437 / NCIMB 947 / NCTC 947) (Lactobacillus brevis) protein is Small ribosomal subunit protein uS7.